The primary structure comprises 166 residues: 3-hydroxyacyl-[acyl-carrier-protein] dehydratase FabZ (166 aa).

Residue histidine 72 is part of the active site.

Belongs to the thioester dehydratase family. FabZ subfamily.

The protein resides in the cytoplasm. The enzyme catalyses a (3R)-hydroxyacyl-[ACP] = a (2E)-enoyl-[ACP] + H2O. Its function is as follows. Involved in unsaturated fatty acids biosynthesis. Catalyzes the dehydration of short chain beta-hydroxyacyl-ACPs and long chain saturated and unsaturated beta-hydroxyacyl-ACPs. This chain is 3-hydroxyacyl-[acyl-carrier-protein] dehydratase FabZ, found in Synechococcus sp. (strain JA-3-3Ab) (Cyanobacteria bacterium Yellowstone A-Prime).